Consider the following 507-residue polypeptide: ATP synthase subunit alpha, chloroplastic (507 aa).

170-177 is an ATP binding site; sequence GDRQTGKT.

It belongs to the ATPase alpha/beta chains family. As to quaternary structure, F-type ATPases have 2 components, CF(1) - the catalytic core - and CF(0) - the membrane proton channel. CF(1) has five subunits: alpha(3), beta(3), gamma(1), delta(1), epsilon(1). CF(0) has four main subunits: a, b, b' and c.

The protein resides in the plastid. The protein localises to the chloroplast thylakoid membrane. It catalyses the reaction ATP + H2O + 4 H(+)(in) = ADP + phosphate + 5 H(+)(out). Its function is as follows. Produces ATP from ADP in the presence of a proton gradient across the membrane. The alpha chain is a regulatory subunit. The protein is ATP synthase subunit alpha, chloroplastic of Buxus microphylla (Littleleaf boxwood).